The following is a 219-amino-acid chain: MASEHQMPASKQQPASPNIAIFEQENFQGRCHELSGACPNLKDAGVDKVGSILVHSGPWVGYEQASCKGEQFVFEKGEYPRWDSWTNSRRSDSITSLRPIKVVRAPRQPLPTRQTKDSQEHKIVLYENPSFTGKKIEIIDDDVPSFHAHGYQEKVSSVRVQSGTWVGYQYPGYRGYQYLFEKGDYKDSSEFGAQHPQIQSVRRIRDMQWHQRGAYHPSN.

A2 is modified (N-acetylalanine). The tract at residues 2 to 16 is N-terminal arm; it reads ASEHQMPASKQQPAS. Beta/gamma crystallin 'Greek key' domains lie at 17 to 56 and 57 to 101; these read PNIAIFEQENFQGRCHELSGACPNLKDAGVDKVGSILVHS and GPWV…RPIK. The interval 102 to 120 is connecting peptide; sequence VVRAPRQPLPTRQTKDSQE. 2 consecutive Beta/gamma crystallin 'Greek key' domains span residues 121 to 162 and 163 to 205; these read HKIV…RVQS and GTWV…RRIR. Residues 207–219 form a C-terminal arm region; sequence MQWHQRGAYHPSN.

This sequence belongs to the beta/gamma-crystallin family. In terms of assembly, homo/heterodimer, or complexes of higher-order. The structure of beta-crystallin oligomers seems to be stabilized through interactions between the N-terminal arms.

Its function is as follows. Crystallins are the dominant structural components of the vertebrate eye lens. The chain is Beta-crystallin B2 (CRYBB2) from Gallus gallus (Chicken).